Here is a 181-residue protein sequence, read N- to C-terminus: Oligoribonuclease (181 aa).

An Exonuclease domain is found at 8–171 (LIWIDMEMTG…ADIYDSIEEL (164 aa)). Residue Y129 is part of the active site.

Belongs to the oligoribonuclease family.

The protein localises to the cytoplasm. Functionally, 3'-to-5' exoribonuclease specific for small oligoribonucleotides. This is Oligoribonuclease from Nitrosomonas europaea (strain ATCC 19718 / CIP 103999 / KCTC 2705 / NBRC 14298).